The following is a 295-amino-acid chain: Phosphatidylglycerol--prolipoprotein diacylglyceryl transferase (295 aa).

Helical transmembrane passes span 17-37 (IKVH…WLLG), 57-77 (LLFY…MLFY), 92-112 (VWDG…ACWW), 127-147 (FMAP…FIGA), 196-216 (QLYE…AVSA), 222-242 (YLVG…VEFV), and 255-275 (WLTR…VLLV). Residue R140 coordinates a 1,2-diacyl-sn-glycero-3-phospho-(1'-sn-glycerol).

This sequence belongs to the Lgt family.

Its subcellular location is the cell inner membrane. It carries out the reaction L-cysteinyl-[prolipoprotein] + a 1,2-diacyl-sn-glycero-3-phospho-(1'-sn-glycerol) = an S-1,2-diacyl-sn-glyceryl-L-cysteinyl-[prolipoprotein] + sn-glycerol 1-phosphate + H(+). It functions in the pathway protein modification; lipoprotein biosynthesis (diacylglyceryl transfer). Functionally, catalyzes the transfer of the diacylglyceryl group from phosphatidylglycerol to the sulfhydryl group of the N-terminal cysteine of a prolipoprotein, the first step in the formation of mature lipoproteins. This chain is Phosphatidylglycerol--prolipoprotein diacylglyceryl transferase, found in Stenotrophomonas maltophilia (strain R551-3).